Here is a 401-residue protein sequence, read N- to C-terminus: Ribosomal RNA dihydrouridine synthase (401 aa).

Residues A15, D34, N35, R41, G47, N52, V132, E371, and F384 each contribute to the FAD site.

This sequence belongs to the BaiN/RdsA family. RdsA subfamily. FAD is required as a cofactor.

It catalyses the reaction a 5,6-dihydrouridine in mRNA + NAD(+) = a uridine in mRNA + NADH + H(+). In terms of biological role, catalyzes the synthesis of 5,6-dihydrouridine (D) at position 2449 in 23S rRNA. The polypeptide is Ribosomal RNA dihydrouridine synthase (Haemophilus influenzae (strain ATCC 51907 / DSM 11121 / KW20 / Rd)).